A 433-amino-acid polypeptide reads, in one-letter code: Ribosomal protein uS12 methylthiotransferase RimO (433 aa).

Residues 6–122 enclose the MTTase N-terminal domain; it reads QSIFLLSLGC…IISVLGGSYR (117 aa). [4Fe-4S] cluster contacts are provided by C15, C51, C85, C146, C150, and C153. The Radical SAM core domain occupies 132 to 362; sequence LTPPHYAWLK…MELQESIAAE (231 aa). The 68-residue stretch at 365–432 folds into the TRAM domain; it reads RELEGRVMKV…AYELHGRVND (68 aa).

Belongs to the methylthiotransferase family. RimO subfamily. Requires [4Fe-4S] cluster as cofactor.

It localises to the cytoplasm. It carries out the reaction L-aspartate(89)-[ribosomal protein uS12]-hydrogen + (sulfur carrier)-SH + AH2 + 2 S-adenosyl-L-methionine = 3-methylsulfanyl-L-aspartate(89)-[ribosomal protein uS12]-hydrogen + (sulfur carrier)-H + 5'-deoxyadenosine + L-methionine + A + S-adenosyl-L-homocysteine + 2 H(+). Functionally, catalyzes the methylthiolation of an aspartic acid residue of ribosomal protein uS12. This Prosthecochloris aestuarii (strain DSM 271 / SK 413) protein is Ribosomal protein uS12 methylthiotransferase RimO.